The primary structure comprises 87 residues: MSERNQRKVYTGRVVSDKMDKTITVLVETYKTHSLYGKRVKYSKKYKAHDEQNQAKLGDIVKIMETRPLSATKRFRLVEIVEEAVII.

This sequence belongs to the universal ribosomal protein uS17 family. As to quaternary structure, part of the 30S ribosomal subunit.

Functionally, one of the primary rRNA binding proteins, it binds specifically to the 5'-end of 16S ribosomal RNA. The protein is Small ribosomal subunit protein uS17 of Bacillus thuringiensis (strain Al Hakam).